The sequence spans 612 residues: Threonine--tRNA ligase (612 aa).

The interval 218–509 is catalytic; sequence NHRKLGVELG…LSEHFGGNFP (292 aa). The Zn(2+) site is built by cysteine 310, histidine 361, and histidine 486.

This sequence belongs to the class-II aminoacyl-tRNA synthetase family. Homodimer. Requires Zn(2+) as cofactor.

Its subcellular location is the cytoplasm. The catalysed reaction is tRNA(Thr) + L-threonine + ATP = L-threonyl-tRNA(Thr) + AMP + diphosphate + H(+). In terms of biological role, catalyzes the attachment of threonine to tRNA(Thr) in a two-step reaction: L-threonine is first activated by ATP to form Thr-AMP and then transferred to the acceptor end of tRNA(Thr). Also edits incorrectly charged L-seryl-tRNA(Thr). This chain is Threonine--tRNA ligase, found in Helicobacter pylori (strain Shi470).